The following is a 297-amino-acid chain: MKRPDYRTLQALDAVIRERGFERAAQKLCITQSAVSQRIKQLENLFGQPLLVRTVPPRPTEQGQKLLALLHQVELLEEEWLGNDNGGDTPLLLSLAVNADSLATWLLPALKPVLADSPIRLNLQVEDETRTQERLRRGEVVGAVSIQPQPLPSCLVDQLGALDYLFVASKPFAERYFPNGVTRSALLKAPAVAFDHLDDMHQAFLQQNFDLSPGSVPCHIVNSSEAFVQLARQGTTCCMIPHLQIEKELASGELINLTPGLLQRRMLFWHRFAPESRTMRKVTDALLSYGRQVLRQD.

An HTH lysR-type domain is found at 4–60 (PDYRTLQALDAVIRERGFERAAQKLCITQSAVSQRIKQLENLFGQPLLVRTVPPRPT). The segment at residues 21-40 (FERAAQKLCITQSAVSQRIK) is a DNA-binding region (H-T-H motif).

The protein belongs to the LysR transcriptional regulatory family. As to quaternary structure, homodimer.

Functionally, controls the transcription of genes involved in arginine and lysine metabolism. In Yersinia enterocolitica serotype O:8 / biotype 1B (strain NCTC 13174 / 8081), this protein is HTH-type transcriptional regulator ArgP.